The sequence spans 1035 residues: Beta-galactosidase (1035 aa).

Residues Asn-109 and Asp-208 each coordinate substrate. Residue Asp-208 coordinates Na(+). Mg(2+) contacts are provided by Glu-424, His-426, and Glu-469. Substrate contacts are provided by residues Glu-469 and 545 to 548 (EYAH). The active-site Proton donor is the Glu-469. Glu-545 (nucleophile) is an active-site residue. Position 605 (Asn-605) interacts with Mg(2+). Positions 609 and 612 each coordinate Na(+). Asn-612 and Trp-1011 together coordinate substrate.

This sequence belongs to the glycosyl hydrolase 2 family. In terms of assembly, homotetramer. The cofactor is Mg(2+). Na(+) serves as cofactor.

It catalyses the reaction Hydrolysis of terminal non-reducing beta-D-galactose residues in beta-D-galactosides.. This chain is Beta-galactosidase, found in Klebsiella pneumoniae (strain 342).